An 854-amino-acid chain; its full sequence is Protein translocase subunit SecA (854 aa).

Residues Gln81, 99 to 103, and Asp487 each bind ATP; that span reads GEGKT.

Belongs to the SecA family. Monomer and homodimer. Part of the essential Sec protein translocation apparatus which comprises SecA, SecYEG and auxiliary proteins SecDF. Other proteins may also be involved.

It is found in the cell membrane. The protein resides in the cytoplasm. It carries out the reaction ATP + H2O + cellular proteinSide 1 = ADP + phosphate + cellular proteinSide 2.. Functionally, part of the Sec protein translocase complex. Interacts with the SecYEG preprotein conducting channel. Has a central role in coupling the hydrolysis of ATP to the transfer of proteins into and across the cell membrane, serving as an ATP-driven molecular motor driving the stepwise translocation of polypeptide chains across the membrane. In Mycoplasma mobile (strain ATCC 43663 / 163K / NCTC 11711) (Mesomycoplasma mobile), this protein is Protein translocase subunit SecA.